Reading from the N-terminus, the 310-residue chain is Porphobilinogen deaminase (310 aa).

Cys243 carries the S-(dipyrrolylmethanemethyl)cysteine modification.

The protein belongs to the HMBS family. In terms of assembly, monomer. The cofactor is dipyrromethane.

It carries out the reaction 4 porphobilinogen + H2O = hydroxymethylbilane + 4 NH4(+). Its pathway is porphyrin-containing compound metabolism; protoporphyrin-IX biosynthesis; coproporphyrinogen-III from 5-aminolevulinate: step 2/4. Tetrapolymerization of the monopyrrole PBG into the hydroxymethylbilane pre-uroporphyrinogen in several discrete steps. This is Porphobilinogen deaminase from Methylobacillus flagellatus (strain ATCC 51484 / DSM 6875 / VKM B-1610 / KT).